We begin with the raw amino-acid sequence, 241 residues long: Viral CASP8 and FADD-like apoptosis regulator (241 aa).

DED domains lie at 8 to 78 (PSLP…SRFG) and 95 to 175 (RYRK…QLVE). The disordered stretch occupies residues 212-241 (CMPVQESSDSPELLRTPVQESSSDSPEQTT). Positions 229–241 (VQESSSDSPEQTT) are enriched in polar residues.

Associates with the death-inducing signaling complex (DISC) formed by TNFRSF6/FAS, FADD and CASP8. Interacts with FADD. Interacts with host TRAF2. Interacts with host NEMO/IKBKG (via N-terminus). Interacts with host SH3BP4; this interaction plays an important in the suppression of host autophagy.

Its subcellular location is the host cytoplasm. The protein localises to the host nucleus. Inhibits TNFRSF1A, TNFRSF6/FAS and TNFRSF12 induced apoptosis. Directs the degradation of host NFKBIB but not NFKBIA. Also suppresses host NF-kappa-B activation by interacting with and preventing ubiquitination of host NEMO/IKBKG, the NF-kappa-B essential modulator subunit of the IKK complex. Interferes with host CASP8/caspase-8 recruitment and activation at the death-inducing signaling complex (DISC). May lead to higher virus production and contribute to virus persistence and oncogenicity. Also participates in the inhibition of host autophagy by interacting with host SH3BP4. The chain is Viral CASP8 and FADD-like apoptosis regulator from Homo sapiens (Human).